A 354-amino-acid chain; its full sequence is Protein RecA (354 aa).

Residue 65 to 72 coordinates ATP; the sequence is GPESSGKT.

Belongs to the RecA family.

Its subcellular location is the cytoplasm. In terms of biological role, can catalyze the hydrolysis of ATP in the presence of single-stranded DNA, the ATP-dependent uptake of single-stranded DNA by duplex DNA, and the ATP-dependent hybridization of homologous single-stranded DNAs. It interacts with LexA causing its activation and leading to its autocatalytic cleavage. This chain is Protein RecA, found in Aeromonas hydrophila subsp. hydrophila (strain ATCC 7966 / DSM 30187 / BCRC 13018 / CCUG 14551 / JCM 1027 / KCTC 2358 / NCIMB 9240 / NCTC 8049).